We begin with the raw amino-acid sequence, 63 residues long: Large ribosomal subunit protein uL29 (63 aa).

Belongs to the universal ribosomal protein uL29 family.

In Bacillus cereus (strain ATCC 14579 / DSM 31 / CCUG 7414 / JCM 2152 / NBRC 15305 / NCIMB 9373 / NCTC 2599 / NRRL B-3711), this protein is Large ribosomal subunit protein uL29.